The sequence spans 107 residues: MSQDTVEIRVEFGGGTELLLAPPHEKKHTLTIPRTDTAGNETNVSFLIGHIRKNLITEREELFVDGDSVRPGILVLINNGDWELEGEGDYVLQDGDEVVFISTLHGG.

Residue Gly107 is modified to 1-thioglycine. A Glycyl lysine isopeptide (Gly-Lys) (interchain with K-? in acceptor proteins) cross-link involves residue Gly107.

Belongs to the URM1 family. Post-translationally, C-terminal thiocarboxylation occurs in 2 steps, it is first acyl-adenylated (-COAMP) via the hesA/moeB/thiF part of UBA4, then thiocarboxylated (-COSH) via the rhodanese domain of UBA4.

It is found in the cytoplasm. It functions in the pathway tRNA modification; 5-methoxycarbonylmethyl-2-thiouridine-tRNA biosynthesis. In terms of biological role, acts as a sulfur carrier required for 2-thiolation of mcm(5)S(2)U at tRNA wobble positions of cytosolic tRNA(Lys), tRNA(Glu) and tRNA(Gln). Serves as sulfur donor in tRNA 2-thiolation reaction by being thiocarboxylated (-COSH) at its C-terminus by the MOCS3 homolog UBA4. The sulfur is then transferred to tRNA to form 2-thiolation of mcm(5)S(2)U. Prior mcm(5) tRNA modification by the elongator complex is required for 2-thiolation. Also acts as a ubiquitin-like protein (UBL) that is covalently conjugated via an isopeptide bond to lysine residues of target proteins such as AHP1. The thiocarboxylated form serves as substrate for conjugation and oxidative stress specifically induces the formation of UBL-protein conjugates. In Mycosarcoma maydis (Corn smut fungus), this protein is Ubiquitin-related modifier 1.